Consider the following 104-residue polypeptide: L-rhamnose mutarotase (104 aa).

Substrate is bound at residue Tyr18. His22 serves as the catalytic Proton donor. Residues Tyr41 and 76–77 (WW) contribute to the substrate site.

Belongs to the rhamnose mutarotase family. As to quaternary structure, homodimer.

The protein resides in the cytoplasm. It catalyses the reaction alpha-L-rhamnose = beta-L-rhamnose. It participates in carbohydrate metabolism; L-rhamnose metabolism. In terms of biological role, involved in the anomeric conversion of L-rhamnose. This chain is L-rhamnose mutarotase, found in Burkholderia ambifaria (strain MC40-6).